The primary structure comprises 280 residues: F-actin-capping protein subunit alpha (280 aa).

Belongs to the F-actin-capping protein alpha subunit family. In terms of assembly, heterodimer of an alpha and a beta subunit.

The protein resides in the cytoplasm. The protein localises to the cytoskeleton. Functionally, F-actin-capping proteins bind in a Ca(2+)-independent manner to the fast growing ends of actin filaments (barbed end) thereby blocking the exchange of subunits at these ends. Unlike other capping proteins (such as gelsolin and severin), these proteins do not sever actin filaments. The protein is F-actin-capping protein subunit alpha (CAP01) of Candida albicans (strain SC5314 / ATCC MYA-2876) (Yeast).